Consider the following 131-residue polypeptide: Increased copper sensitivity protein 3 (131 aa).

2 consecutive transmembrane segments (helical) span residues 35 to 55 (ISVL…IFFS) and 74 to 94 (IALT…IIAF).

The protein localises to the membrane. The sequence is that of Increased copper sensitivity protein 3 (ICS3) from Saccharomyces cerevisiae (strain ATCC 204508 / S288c) (Baker's yeast).